The sequence spans 407 residues: Phosphopentomutase (407 aa).

Residues Asp10, Asp306, His311, Asp347, His348, and His359 each coordinate Mn(2+).

It belongs to the phosphopentomutase family. Mn(2+) is required as a cofactor.

It localises to the cytoplasm. The enzyme catalyses 2-deoxy-alpha-D-ribose 1-phosphate = 2-deoxy-D-ribose 5-phosphate. It carries out the reaction alpha-D-ribose 1-phosphate = D-ribose 5-phosphate. It functions in the pathway carbohydrate degradation; 2-deoxy-D-ribose 1-phosphate degradation; D-glyceraldehyde 3-phosphate and acetaldehyde from 2-deoxy-alpha-D-ribose 1-phosphate: step 1/2. Isomerase that catalyzes the conversion of deoxy-ribose 1-phosphate (dRib-1-P) and ribose 1-phosphate (Rib-1-P) to deoxy-ribose 5-phosphate (dRib-5-P) and ribose 5-phosphate (Rib-5-P), respectively. The protein is Phosphopentomutase of Edwardsiella ictaluri (strain 93-146).